We begin with the raw amino-acid sequence, 397 residues long: Kappa-carrageenase (397 aa).

The signal sequence occupies residues 1–25 (MKPISIVAFPIPAISMLLLSAVSQA). Positions 26–299 (ASMQPPIAKP…YVRTWVKVGN (274 aa)) constitute a GH16 domain. Cysteines 98 and 268 form a disulfide. Glutamate 163 functions as the Nucleophile in the catalytic mechanism. Aspartate 165 is a catalytic residue. The Proton donor role is filled by glutamate 168. One can recognise a BIG2 domain in the interval 316-387 (AVNSVQLSAA…TITVKTKNKG (72 aa)).

This sequence belongs to the glycosyl hydrolase 16 family.

The protein resides in the periplasm. The catalysed reaction is Endohydrolysis of (1-&gt;4)-beta-D-linkages between D-galactose 4-sulfate and 3,6-anhydro-D-galactose in kappa-carrageenans.. This Pseudoalteromonas carrageenovora (Alteromonas carrageenovora) protein is Kappa-carrageenase (cgkA).